A 291-amino-acid polypeptide reads, in one-letter code: Glycolipid transfer protein domain-containing protein 2 (291 aa).

Residue Asn-276 is glycosylated (N-linked (GlcNAc...) asparagine).

Belongs to the GLTP family.

This Homo sapiens (Human) protein is Glycolipid transfer protein domain-containing protein 2 (GLTPD2).